The sequence spans 1690 residues: DNA-directed RNA polymerase subunit beta' (1690 aa).

Positions 63, 65, 78, and 81 each coordinate Zn(2+). The Mg(2+) site is built by D753, D755, and D757. C1107, C1295, C1302, and C1305 together coordinate Zn(2+).

This sequence belongs to the RNA polymerase beta' chain family. As to quaternary structure, the RNAP catalytic core consists of 2 alpha, 1 beta, 1 beta' and 1 omega subunit. When a sigma factor is associated with the core the holoenzyme is formed, which can initiate transcription. Requires Mg(2+) as cofactor. The cofactor is Zn(2+).

The enzyme catalyses RNA(n) + a ribonucleoside 5'-triphosphate = RNA(n+1) + diphosphate. In terms of biological role, DNA-dependent RNA polymerase catalyzes the transcription of DNA into RNA using the four ribonucleoside triphosphates as substrates. The polypeptide is DNA-directed RNA polymerase subunit beta' (Thermotoga petrophila (strain ATCC BAA-488 / DSM 13995 / JCM 10881 / RKU-1)).